Consider the following 65-residue polypeptide: Large ribosomal subunit protein bL28 (65 aa).

Residues 1–21 form a disordered region; it reads MAKKDQLTLRGPLYGNNRSHS.

It belongs to the bacterial ribosomal protein bL28 family.

The polypeptide is Large ribosomal subunit protein bL28 (Mycoplasma pneumoniae (strain ATCC 29342 / M129 / Subtype 1) (Mycoplasmoides pneumoniae)).